Consider the following 153-residue polypeptide: Partner of bursicon (153 aa).

The first 35 residues, 1 to 35, serve as a signal peptide directing secretion; it reads MCNSVRTALAASNCCSIVLCCVLLLTLTLTVAVTA. Cystine bridges form between cysteine 44/cysteine 102, cysteine 68/cysteine 117, cysteine 77/cysteine 143, cysteine 81/cysteine 145, and cysteine 99/cysteine 148. A CTCK domain is found at 44–139; that stretch reads CETLPSEIHL…SATMEIRLKE (96 aa).

Heterodimer of burs and pburs.

It localises to the secreted. In terms of biological role, final heterodimeric neurohormone released at the end of the molting cycle, involved in the sclerotization (tanning) of the insect cuticle, melanization and wing spreading. This Anopheles gambiae (African malaria mosquito) protein is Partner of bursicon.